Here is a 353-residue protein sequence, read N- to C-terminus: Nicotinate-nucleotide--dimethylbenzimidazole phosphoribosyltransferase (353 aa).

E320 functions as the Proton acceptor in the catalytic mechanism.

The protein belongs to the CobT family.

The enzyme catalyses 5,6-dimethylbenzimidazole + nicotinate beta-D-ribonucleotide = alpha-ribazole 5'-phosphate + nicotinate + H(+). It participates in nucleoside biosynthesis; alpha-ribazole biosynthesis; alpha-ribazole from 5,6-dimethylbenzimidazole: step 1/2. In terms of biological role, catalyzes the synthesis of alpha-ribazole-5'-phosphate from nicotinate mononucleotide (NAMN) and 5,6-dimethylbenzimidazole (DMB). The sequence is that of Nicotinate-nucleotide--dimethylbenzimidazole phosphoribosyltransferase from Syntrophotalea carbinolica (strain DSM 2380 / NBRC 103641 / GraBd1) (Pelobacter carbinolicus).